We begin with the raw amino-acid sequence, 190 residues long: Lipid A acyltransferase PagP (190 aa).

The N-terminal stretch at 1 to 29 (MYVAMIIRKYFLIIALLVMPWLAIPSVSA) is a signal peptide. Active-site residues include His62, Asp105, and Ser106.

Belongs to the lipid A palmitoyltransferase family. As to quaternary structure, homodimer.

It is found in the cell outer membrane. The catalysed reaction is a lipid A + a 1,2-diacyl-sn-glycero-3-phosphocholine = a hepta-acyl lipid A + a 2-acyl-sn-glycero-3-phosphocholine. The enzyme catalyses a lipid IVA + a 1,2-diacyl-sn-glycero-3-phosphocholine = a lipid IVB + a 2-acyl-sn-glycero-3-phosphocholine. It carries out the reaction a lipid IIA + a 1,2-diacyl-sn-glycero-3-phosphocholine = a lipid IIB + a 2-acyl-sn-glycero-3-phosphocholine. Functionally, transfers a fatty acid residue from the sn-1 position of a phospholipid to the N-linked hydroxyfatty acid chain on the proximal unit of lipid A or its precursors. This is Lipid A acyltransferase PagP from Salmonella typhi.